The sequence spans 302 residues: MFQVVSKTDWLTVRAYFALLKPRVVSLVTFTAVTGAVLAYFSGYHAPFFSVFTAIFCIAVGSGAAGALNMYYDRDIDAIMSRTSKRPIPQGKISPEAALVFGLVLFALSVLLMELAVNHLSAVLLSVAVFYYSVIYTVYLKRRTPQNIVVGGGAGAFPPMIGWAAVANHIGVESLVLFLIIFLWTPPHFWALALKNSGEYEAAGIPMLPVTSGVKATKMQILCYSVLLFITSILPYLLRFSGGTYMIVAFILGLVFLYYAINVYLDEKKCMKLFYYSVLYLFLLFGVFILDAALSTALGMLI.

9 consecutive transmembrane segments (helical) span residues 24–44, 48–68, 97–117, 120–140, 147–167, 174–194, 221–241, 245–265, and 282–302; these read VVSL…FSGY, FFSV…AGAL, AALV…ELAV, LSAV…TVYL, NIVV…AAVA, SLVL…ALAL, ILCY…LRFS, YMIV…NVYL, and FLLF…GMLI.

The protein belongs to the UbiA prenyltransferase family. Protoheme IX farnesyltransferase subfamily.

The protein localises to the cell inner membrane. It carries out the reaction heme b + (2E,6E)-farnesyl diphosphate + H2O = Fe(II)-heme o + diphosphate. It participates in porphyrin-containing compound metabolism; heme O biosynthesis; heme O from protoheme: step 1/1. Functionally, converts heme B (protoheme IX) to heme O by substitution of the vinyl group on carbon 2 of heme B porphyrin ring with a hydroxyethyl farnesyl side group. In Neorickettsia sennetsu (strain ATCC VR-367 / Miyayama) (Ehrlichia sennetsu), this protein is Protoheme IX farnesyltransferase.